The primary structure comprises 459 residues: V-type ATP synthase beta chain (459 aa).

The protein belongs to the ATPase alpha/beta chains family.

Its function is as follows. Produces ATP from ADP in the presence of a proton gradient across the membrane. The V-type beta chain is a regulatory subunit. The polypeptide is V-type ATP synthase beta chain (Thermoanaerobacter sp. (strain X514)).